The primary structure comprises 327 residues: Ferrochelatase (327 aa).

The Fe cation site is built by His-196 and Glu-277.

The protein belongs to the ferrochelatase family.

It is found in the cytoplasm. It carries out the reaction heme b + 2 H(+) = protoporphyrin IX + Fe(2+). The protein operates within porphyrin-containing compound metabolism; protoheme biosynthesis; protoheme from protoporphyrin-IX: step 1/1. Functionally, catalyzes the ferrous insertion into protoporphyrin IX. In Gloeobacter violaceus (strain ATCC 29082 / PCC 7421), this protein is Ferrochelatase.